Consider the following 317-residue polypeptide: Ventral anterior homeobox 1 (317 aa).

A disordered region spans residues 1–62 (MEVRYSQDSE…CEKSRASSGD (62 aa)). Over residues 18–27 (GLKEGKEGKD) the composition is skewed to basic and acidic residues. The homeobox DNA-binding region spans 92 to 151 (PKRTRTSFTAEQLYRLEMEFQRCQYVVGRERTELARQLNLSETQVKVWFQNRRTKQKKDQ). The tract at residues 203 to 248 (GPSLGITANGGSSSSSRSSAGSSGTAGGSPPLPTVTSSGTVTGLQG) is disordered. A compositionally biased stretch (low complexity) spans 212 to 225 (GGSSSSSRSSAGSS). Residues 236–247 (TVTSSGTVTGLQ) show a composition bias toward polar residues.

It belongs to the EMX homeobox family. Expressed in the anterior neural keel and later in the preoptic area and optic stalk.

It localises to the nucleus. In terms of biological role, transcription factor that is required for closure of the choroid fissure and together with Vax2 is required for optic nerve differentiation and to limit retinal development to the optic cup. This is Ventral anterior homeobox 1 (vax1) from Danio rerio (Zebrafish).